The chain runs to 251 residues: Large ribosomal subunit protein uL16m (251 aa).

The transit peptide at 1–29 (MWRLLSGARAPVLRATLSDSWAAPPARAG) directs the protein to the mitochondrion.

The protein belongs to the universal ribosomal protein uL16 family. As to quaternary structure, component of the mitochondrial ribosome large subunit (39S) which comprises a 16S rRNA and about 50 distinct proteins.

Its subcellular location is the mitochondrion. In Bos taurus (Bovine), this protein is Large ribosomal subunit protein uL16m (MRPL16).